Here is a 503-residue protein sequence, read N- to C-terminus: Annexin A11 (503 aa).

Composition is skewed to pro residues over residues 1–17 (MSYPGYPPPPGGYPPAP), 80–145 (GYPP…PYPG), and 155–169 (SPVPPPGQQPMPSYP). Disordered stretches follow at residues 1-35 (MSYPGYPPPPGGYPPAPGGGAWGGAGYPPPSMPPI) and 56-178 (AANM…GTVT). 4 Annexin repeats span residues 198–269 (FDPL…ALMK), 270–341 (TPIL…SLSQ), 353–425 (SLVQ…AVVK), and 429–500 (NTPA…KICG). N6-acetyllysine is present on residues Lys-246 and Lys-253. Residue Lys-477 is modified to N6-acetyllysine.

This sequence belongs to the annexin family. As to quaternary structure, interacts with PDCD6 in a calcium-dependent manner. Interacts with KIF23 during cytokinesis. Interacts with S100A6.

Its subcellular location is the cytoplasm. The protein resides in the melanosome. It localises to the nucleus envelope. It is found in the nucleus. The protein localises to the nucleoplasm. Its subcellular location is the cytoskeleton. The protein resides in the spindle. Functionally, required for midbody formation and completion of the terminal phase of cytokinesis. Binds specifically to calcyclin in a calcium-dependent manner. The chain is Annexin A11 (ANXA11) from Oryctolagus cuniculus (Rabbit).